Here is an 87-residue protein sequence, read N- to C-terminus: Small ribosomal subunit protein uS15 (87 aa).

Positions 1–19 are enriched in basic and acidic residues; it reads MDKAKKQELMAKHARHEGD. The segment at 1-23 is disordered; the sequence is MDKAKKQELMAKHARHEGDTGSP.

The protein belongs to the universal ribosomal protein uS15 family. As to quaternary structure, part of the 30S ribosomal subunit. Forms a bridge to the 50S subunit in the 70S ribosome, contacting the 23S rRNA.

Its function is as follows. One of the primary rRNA binding proteins, it binds directly to 16S rRNA where it helps nucleate assembly of the platform of the 30S subunit by binding and bridging several RNA helices of the 16S rRNA. Functionally, forms an intersubunit bridge (bridge B4) with the 23S rRNA of the 50S subunit in the ribosome. This Clostridium botulinum (strain Loch Maree / Type A3) protein is Small ribosomal subunit protein uS15.